The sequence spans 84 residues: Delta-stichotoxin-Shd3a (84 aa).

The signal sequence occupies residues 1 to 19 (MAYLKIVLVALMLVLGVSA). Positions 20–33 (MRLSDQEDQDVSVV) are excised as a propeptide. 3 disulfide bridges follow: Cys38–Cys78, Cys40–Cys68, and Cys61–Cys79. Lys83 carries the post-translational modification Lysine amide.

Belongs to the sea anemone sodium channel inhibitory toxin family. Type II subfamily.

It localises to the secreted. It is found in the nematocyst. Its function is as follows. Binds specifically to voltage-gated sodium channels (Nav), thereby delaying their inactivation during signal transduction. The protein is Delta-stichotoxin-Shd3a of Stichodactyla haddoni (Saddle carpet anemone).